Reading from the N-terminus, the 1104-residue chain is Receptor-mediated endocytosis protein 6 (1104 aa).

The region spanning 156-389 is the Ras-GAP domain; it reads LKIAQVVCYL…EMMDSLLVEN (234 aa). The tract at residues 663 to 682 is disordered; that stretch reads SSLAKQPSGMVSSASAQNIP. One can recognise a VPS9 domain in the interval 966 to 1104; it reads QKKDKLLQSV…SAVEYIKTIL (139 aa).

It belongs to the GAPVD1 family. As to quaternary structure, interacts with GDP-bound rab-5. Interacts with alpha-adaptin.

The protein resides in the membrane. It localises to the cytoplasmic vesicle. Its subcellular location is the clathrin-coated vesicle. In terms of biological role, acts both as a GTPase-activating protein (GAP) and a guanine nucleotide exchange factor (GEF), and participates in endocytosis. Acts by regulating the activation of rab-5 by exchanging bound GDP for free GTP at clathrin coated pits. The polypeptide is Receptor-mediated endocytosis protein 6 (rme-6) (Caenorhabditis briggsae).